A 118-amino-acid polypeptide reads, in one-letter code: uncharacterized protein (118 aa).

This is an uncharacterized protein from Invertebrate iridescent virus 6 (IIV-6).